A 182-amino-acid polypeptide reads, in one-letter code: Transcription antitermination protein NusB (182 aa).

The interval 159–182 is disordered; that stretch reads TPVENSEAEAAGYPVEESIEEDSQ.

The protein belongs to the NusB family.

Its function is as follows. Involved in transcription antitermination. Required for transcription of ribosomal RNA (rRNA) genes. Binds specifically to the boxA antiterminator sequence of the ribosomal RNA (rrn) operons. The chain is Transcription antitermination protein NusB from Corynebacterium diphtheriae (strain ATCC 700971 / NCTC 13129 / Biotype gravis).